The following is a 430-amino-acid chain: Synaptotagmin-11 (430 aa).

The Vesicular segment spans residues Met-1–Pro-15. The helical transmembrane segment at Val-16–Val-36 threads the bilayer. Residues Trp-37–Tyr-430 lie on the Cytoplasmic side of the membrane. The segment covering Arg-79–Gly-90 has biased composition (basic and acidic residues). Disordered regions lie at residues Arg-79 to Gln-120 and Arg-132 to Glu-152. Ser-133 is modified (phosphoserine). Over residues Pro-134–Ser-150 the composition is skewed to polar residues. C2 domains are found at residues Met-156 to Arg-278 and Ser-290 to His-425. Residues Asp-249, Ser-252, and Asp-255 each contribute to the Ca(2+) site.

It belongs to the synaptotagmin family. As to quaternary structure, homodimer. Can also form heterodimers. Interacts with PRKN. Interacts (via C2 2 domain) with AGO2 and SND1; the interaction with SND1 is direct. Interacts with KIF1A; the interaction increases in presence of calcium. Ca(2+) is required as a cofactor. Post-translationally, ubiquitinated, at least by PRKN, and targeted to the proteasome complex for degradation. Ubiquitination is inhibited by ATP13A2. In terms of tissue distribution, expressed in cerebellun, cerebellar cortex, hippocampus, olfactory bulb and spinal cord (at protein level). Expressed by neurons, astrocytes and microglia (at protein level). Expressed in macrophages (at protein level).

The protein resides in the cytoplasmic vesicle membrane. It is found in the perikaryon. It localises to the golgi apparatus. Its subcellular location is the trans-Golgi network membrane. The protein localises to the recycling endosome membrane. The protein resides in the lysosome membrane. It is found in the cytoplasmic vesicle. It localises to the phagosome. Its subcellular location is the cell projection. The protein localises to the axon. The protein resides in the dendrite. It is found in the postsynaptic density. It localises to the clathrin-coated vesicle membrane. Its function is as follows. Synaptotagmin family member involved in vesicular and membrane trafficking which does not bind Ca(2+). Inhibits clathrin-mediated and bulk endocytosis, functions to ensure precision in vesicle retrieval. Plays an important role in dopamine transmission by regulating endocytosis and the vesicle-recycling process. Essential component of a neuronal vesicular trafficking pathway that differs from the synaptic vesicle trafficking pathway but is crucial for development and synaptic plasticity. In macrophages and microglia, inhibits the conventional cytokine secretion, of at least IL6 and TNF, and phagocytosis. In astrocytes, regulates lysosome exocytosis, mechanism required for the repair of injured astrocyte cell membrane. Required for the ATP13A2-mediated regulation of the autophagy-lysosome pathway. This chain is Synaptotagmin-11, found in Mus musculus (Mouse).